A 648-amino-acid chain; its full sequence is Phosphatidylinositol-3,5-bisphosphate 3-phosphatase MTMR14 (648 aa).

Residues 1 to 19 (MAGARAAAAASAGSTASSG) show a composition bias toward low complexity. The segment at 1–27 (MAGARAAAAASAGSTASSGSPPPQEPG) is disordered. At Lys-193 the chain carries N6-acetyllysine. Residues Asn-225 and Asn-240 are each glycosylated (N-linked (GlcNAc...) asparagine). Residue Cys-329 is the Phosphocysteine intermediate of the active site. Residues Gly-332, Trp-333, Asp-334, Arg-335, and Arg-381 each coordinate a 1,2-diacyl-sn-glycero-3-phospho-(1D-myo-inositol-3,5-bisphosphate). A 1,2-diacyl-sn-glycero-3-phospho-(1D-myo-inositol-3-phosphate) is bound by residues Gly-332, Trp-333, Asp-334, Arg-335, and Arg-381. Residues 471–544 (PTQAAWRKSH…PRSVDHPLPG (74 aa)) form a disordered region. Over residues 494 to 506 (PSEERLPSHHGLT) the composition is skewed to basic and acidic residues. Ser-516 is modified (phosphoserine). Asn-517 carries an N-linked (GlcNAc...) asparagine glycan. Phosphoserine is present on residues Ser-528, Ser-578, and Ser-622. An Omega-N-methylarginine modification is found at Arg-636.

It belongs to the protein-tyrosine phosphatase family. Non-receptor class myotubularin subfamily.

It localises to the cytoplasm. It catalyses the reaction a 1,2-diacyl-sn-glycero-3-phospho-(1D-myo-inositol-3,5-bisphosphate) + H2O = a 1,2-diacyl-sn-glycero-3-phospho-(1D-myo-inositol-5-phosphate) + phosphate. It carries out the reaction a 1,2-diacyl-sn-glycero-3-phospho-(1D-myo-inositol-3-phosphate) + H2O = a 1,2-diacyl-sn-glycero-3-phospho-(1D-myo-inositol) + phosphate. Its function is as follows. Lipid phosphatase that specifically dephosphorylates the D-3 position of phosphatidylinositol 3-phosphate and phosphatidylinositol 3,5-bisphosphate, generating phosphatidylinositol and phosphatidylinositol 5-phosphate. This Mus musculus (Mouse) protein is Phosphatidylinositol-3,5-bisphosphate 3-phosphatase MTMR14.